A 424-amino-acid polypeptide reads, in one-letter code: Formyl-CoA:oxalate CoA-transferase (424 aa).

Residues 17 to 18, R38, 96 to 98, R104, and 136 to 139 each bind CoA; these read QS, NFA, and KVYE. D168 serves as the catalytic Nucleophile. A substrate-binding site is contributed by 247–249; sequence GGQ.

Belongs to the CoA-transferase III family. Frc subfamily. Homodimer.

The catalysed reaction is formyl-CoA + oxalate = oxalyl-CoA + formate. The protein operates within metabolic intermediate degradation; oxalate degradation; CO(2) and formate from oxalate: step 1/2. Involved in the catabolism of oxalate and in the adapatation to low pH via the induction of the oxalate-dependent acid tolerance response (ATR). Catalyzes the transfer of the CoA moiety from formyl-CoA to oxalate. The sequence is that of Formyl-CoA:oxalate CoA-transferase from Afipia carboxidovorans (strain ATCC 49405 / DSM 1227 / KCTC 32145 / OM5) (Oligotropha carboxidovorans).